The following is a 208-amino-acid chain: Outer-membrane lipoprotein carrier protein (208 aa).

A signal peptide spans 1–25 (MKKLFSAKLFSALVLSFSLFSTAHA).

It belongs to the LolA family. In terms of assembly, monomer.

It is found in the periplasm. Participates in the translocation of lipoproteins from the inner membrane to the outer membrane. Only forms a complex with a lipoprotein if the residue after the N-terminal Cys is not an aspartate (The Asp acts as a targeting signal to indicate that the lipoprotein should stay in the inner membrane). The chain is Outer-membrane lipoprotein carrier protein from Vibrio campbellii (strain ATCC BAA-1116).